A 258-amino-acid polypeptide reads, in one-letter code: Global transcriptional regulator CodY (258 aa).

The interval 1–156 is GAF domain; sequence MSSLLSKTRR…SATIVGMEML (156 aa). Positions 204–223 form a DNA-binding region, H-T-H motif; the sequence is ASKIADKVGITRSVIVNALR.

Belongs to the CodY family.

The protein resides in the cytoplasm. DNA-binding global transcriptional regulator which is involved in the adaptive response to starvation and acts by directly or indirectly controlling the expression of numerous genes in response to nutrient availability. During rapid exponential growth, CodY is highly active and represses genes whose products allow adaptation to nutrient depletion. In Clostridium botulinum (strain Alaska E43 / Type E3), this protein is Global transcriptional regulator CodY.